The following is a 1672-amino-acid chain: Probable outer membrane protein PmpB (1672 aa).

A signal peptide spans 1–14 (MSSMKWLSATAVFA). 4 disordered regions span residues 69-122 (IPVK…GGAF), 203-263 (NTAE…GSGG), 384-415 (EAQT…AKGG), and 734-765 (STGV…PAPA). Low complexity-rich tracts occupy residues 77–88 (DDSSTSTPTTSS), 100–111 (SSSSSPNSGDTS), and 203–234 (NTAE…SKVQ). 2 stretches are compositionally biased toward polar residues: residues 235–256 (SLFT…QTPS) and 384–399 (EAQT…SQSG). Over residues 734–744 (STGVATTATTS) the composition is skewed to low complexity. An Autotransporter domain is found at 1379–1672 (DDAAYNNFWV…MTSCGARMIF (294 aa)).

It belongs to the PMP outer membrane protein family.

It localises to the secreted. Its subcellular location is the cell wall. The protein resides in the cell outer membrane. The chain is Probable outer membrane protein PmpB (pmpB) from Chlamydia muridarum (strain MoPn / Nigg).